The sequence spans 94 residues: MLKPLGDRVLIEVSEEEEKTVGGIVLASTAQEKPQTGKVVAVGPGRTLDNGELATVPVNVGDTVLFEKYAGSEVKYDGQDYMIFSAKDLVAIVE.

It belongs to the GroES chaperonin family. Heptamer of 7 subunits arranged in a ring. Interacts with the chaperonin GroEL.

It localises to the cytoplasm. Functionally, together with the chaperonin GroEL, plays an essential role in assisting protein folding. The GroEL-GroES system forms a nano-cage that allows encapsulation of the non-native substrate proteins and provides a physical environment optimized to promote and accelerate protein folding. GroES binds to the apical surface of the GroEL ring, thereby capping the opening of the GroEL channel. The sequence is that of Co-chaperonin GroES from Tetragenococcus halophilus (Pediococcus halophilus).